A 375-amino-acid chain; its full sequence is F420-dependent formate dehydrogenase 2 subunit beta (375 aa).

2 4Fe-4S ferredoxin-type domains span residues 268-291 and 320-349; these read PEPE…DVCP and IRLS…AKIY. [4Fe-4S] cluster-binding residues include C280, C283, C286, C290, C329, C332, C335, and C339.

This sequence belongs to the FrhB family. As to quaternary structure, dimer of an alpha (FdhA2) and a beta (FdhB2) subunit. The cofactor is [4Fe-4S] cluster. FAD is required as a cofactor. It depends on Zn(2+) as a cofactor.

The enzyme catalyses oxidized coenzyme F420-(gamma-L-Glu)(n) + formate + 2 H(+) = reduced coenzyme F420-(gamma-L-Glu)(n) + CO2. In terms of biological role, catalyzes the oxidation of formate to carbon dioxide, with coenzyme F420 as the electron acceptor. In vitro can also use methyl viologen as electron acceptor. This is F420-dependent formate dehydrogenase 2 subunit beta from Methanococcus maripaludis (strain DSM 14266 / JCM 13030 / NBRC 101832 / S2 / LL).